The sequence spans 352 residues: Probable protein phosphatase 2C 56 (352 aa).

Disordered stretches follow at residues 18 to 37 (RGRR…ASRG) and 53 to 87 (SSSS…ITGG). 2 stretches are compositionally biased toward low complexity: residues 23-37 (AASP…ASRG) and 53-75 (SSSS…ARTR). The 248-residue stretch at 96 to 343 (SWDYSSFKGR…DNITCIVLQF (248 aa)) folds into the PPM-type phosphatase domain. Residues aspartate 132, glycine 133, aspartate 295, and aspartate 334 each contribute to the Mn(2+) site.

It belongs to the PP2C family. Mg(2+) is required as a cofactor. Requires Mn(2+) as cofactor.

The catalysed reaction is O-phospho-L-seryl-[protein] + H2O = L-seryl-[protein] + phosphate. It catalyses the reaction O-phospho-L-threonyl-[protein] + H2O = L-threonyl-[protein] + phosphate. The polypeptide is Probable protein phosphatase 2C 56 (Oryza sativa subsp. japonica (Rice)).